Here is a 118-residue protein sequence, read N- to C-terminus: Holo-[acyl-carrier-protein] synthase (118 aa).

Mg(2+)-binding residues include D8 and E58.

This sequence belongs to the P-Pant transferase superfamily. AcpS family. It depends on Mg(2+) as a cofactor.

The protein resides in the cytoplasm. It catalyses the reaction apo-[ACP] + CoA = holo-[ACP] + adenosine 3',5'-bisphosphate + H(+). Its function is as follows. Transfers the 4'-phosphopantetheine moiety from coenzyme A to a Ser of acyl-carrier-protein. This Streptococcus equi subsp. zooepidemicus (strain H70) protein is Holo-[acyl-carrier-protein] synthase.